The sequence spans 250 residues: 2,3-bisphosphoglycerate-dependent phosphoglycerate mutase (250 aa).

Substrate-binding positions include 10-17 (RHGESQWN), 23-24 (TG), R62, 89-92 (ERHY), K100, 116-117 (RR), and 185-186 (GN). The active-site Tele-phosphohistidine intermediate is H11. The active-site Proton donor/acceptor is E89.

This sequence belongs to the phosphoglycerate mutase family. BPG-dependent PGAM subfamily. As to quaternary structure, homodimer.

It catalyses the reaction (2R)-2-phosphoglycerate = (2R)-3-phosphoglycerate. The protein operates within carbohydrate degradation; glycolysis; pyruvate from D-glyceraldehyde 3-phosphate: step 3/5. Catalyzes the interconversion of 2-phosphoglycerate and 3-phosphoglycerate. This chain is 2,3-bisphosphoglycerate-dependent phosphoglycerate mutase, found in Salmonella paratyphi A (strain ATCC 9150 / SARB42).